Here is a 98-residue protein sequence, read N- to C-terminus: NADH-ubiquinone oxidoreductase chain 4L (98 aa).

The next 3 membrane-spanning stretches (helical) occupy residues 1-21, 29-49, and 61-81; these read MSIT…GMFV, SLLC…IVSL, and VILL…LIMV.

The protein belongs to the complex I subunit 4L family. As to quaternary structure, core subunit of respiratory chain NADH dehydrogenase (Complex I) which is composed of 45 different subunits.

Its subcellular location is the mitochondrion inner membrane. The catalysed reaction is a ubiquinone + NADH + 5 H(+)(in) = a ubiquinol + NAD(+) + 4 H(+)(out). Functionally, core subunit of the mitochondrial membrane respiratory chain NADH dehydrogenase (Complex I) which catalyzes electron transfer from NADH through the respiratory chain, using ubiquinone as an electron acceptor. Part of the enzyme membrane arm which is embedded in the lipid bilayer and involved in proton translocation. This is NADH-ubiquinone oxidoreductase chain 4L (MT-ND4L) from Ochotona princeps (Southern American pika).